An 82-amino-acid polypeptide reads, in one-letter code: Small ribosomal subunit protein eS27A (82 aa).

The C4-type zinc finger occupies 37–59; it reads CPGCLNITTVFSHAQTAVTCESC. At Cys-40 the chain carries S-methylcysteine.

The protein belongs to the eukaryotic ribosomal protein eS27 family. As to quaternary structure, component of the small ribosomal subunit (SSU). Mature yeast ribosomes consist of a small (40S) and a large (60S) subunit. The 40S small subunit contains 1 molecule of ribosomal RNA (18S rRNA) and 33 different proteins (encoded by 57 genes). The large 60S subunit contains 3 rRNA molecules (25S, 5.8S and 5S rRNA) and 46 different proteins (encoded by 81 genes). The cofactor is Zn(2+). Post-translationally, the N-terminus is not modified.

The protein localises to the cytoplasm. Component of the ribosome, a large ribonucleoprotein complex responsible for the synthesis of proteins in the cell. The small ribosomal subunit (SSU) binds messenger RNAs (mRNAs) and translates the encoded message by selecting cognate aminoacyl-transfer RNA (tRNA) molecules. The large subunit (LSU) contains the ribosomal catalytic site termed the peptidyl transferase center (PTC), which catalyzes the formation of peptide bonds, thereby polymerizing the amino acids delivered by tRNAs into a polypeptide chain. The nascent polypeptides leave the ribosome through a tunnel in the LSU and interact with protein factors that function in enzymatic processing, targeting, and the membrane insertion of nascent chains at the exit of the ribosomal tunnel. In Saccharomyces cerevisiae (strain ATCC 204508 / S288c) (Baker's yeast), this protein is Small ribosomal subunit protein eS27A.